The primary structure comprises 404 residues: Endophilin-B2 (404 aa).

At methionine 1 the chain carries N-acetylmethionine. The membrane-binding amphipathic helix stretch occupies residues 1–27 (MDFNMKKLASDAGIFFTRAVQFTEEKF). Serine 10 carries the post-translational modification Phosphoserine. Residues 24–291 (EEKFGQAEKT…LGSSQGAIFP (268 aa)) form the BAR domain. A coiled-coil region spans residues 209 to 239 (SASALWNDEVDKAEQELRAAQTEFDRQAEVT). Residues 344–404 (SGTRKARVLY…VPVTYLELLS (61 aa)) enclose the SH3 domain. Serine 404 carries the phosphoserine modification.

Belongs to the endophilin family. As to quaternary structure, homodimer, and heterodimer with SH3GLB1.

It localises to the cytoplasm. The polypeptide is Endophilin-B2 (Rattus norvegicus (Rat)).